Consider the following 305-residue polypeptide: Beta-lactamase (305 aa).

A signal peptide (tat-type signal) is located at residues Met1–Ala34. Ser82 acts as the Acyl-ester intermediate in catalysis. Lys250 to Gly252 contributes to the substrate binding site.

This sequence belongs to the class-A beta-lactamase family. In terms of processing, predicted to be exported by the Tat system. The position of the signal peptide cleavage has not been experimentally proven.

The enzyme catalyses a beta-lactam + H2O = a substituted beta-amino acid. The protein is Beta-lactamase of Streptomyces lavendulae.